The chain runs to 342 residues: Autoinducer 2 import system permease protein LsrC (342 aa).

Over 1–13 (MLKFIQNNREITA) the chain is Periplasmic. A helical transmembrane segment spans residues 14–34 (LLAVVLLFVLPGFLDRQYLSV). The Cytoplasmic segment spans residues 35 to 38 (QTLT). Residues 39-59 (MVYSSAQILILLAMGATLVML) traverse the membrane as a helical segment. Residues 60–69 (TRNIDVSVGS) lie on the Periplasmic side of the membrane. A helical membrane pass occupies residues 70 to 90 (ITGMCAVLLGMLLNAGYSLPV). Over 91-92 (AC) the chain is Cytoplasmic. The helical transmembrane segment at 93 to 113 (VATLLLGLLAGFFNGALVAWL) threads the bilayer. Lys-114 is a topological domain (periplasmic). A helical transmembrane segment spans residues 115 to 135 (IPAIVATLGTLGLYRGIMLLW). Residues 136–154 (TGGKWIEGLPAELKQLSAP) are Cytoplasmic-facing. The chain crosses the membrane as a helical span at residues 155–175 (LLLGISAIGWLTIILVAFMAW). Over 176-212 (LLAKTAFGRSFYATGDNLQGARQLGVRTEAIRIVAFS) the chain is Periplasmic. A helical transmembrane segment spans residues 213-233 (LNGCMAALAGIVFASQIGFIL). Residues 234–251 (NQTGTGLEMKAIAACVLG) lie on the Cytoplasmic side of the membrane. Residues 252–272 (GISLLGGSGAIIGAVLGAWFL) form a helical membrane-spanning segment. Over 273–283 (TQIDSVLVLLR) the chain is Periplasmic. A helical membrane pass occupies residues 284–304 (IPAWWNDFIAGLVLLAVLVFD). Over 305–342 (GRLRCALERNLRRQKYARFMTPPPSVKPASSGKKREAA) the chain is Cytoplasmic.

Belongs to the binding-protein-dependent transport system permease family. AraH/RbsC subfamily. In terms of assembly, the complex is composed of two ATP-binding proteins (LsrA), two transmembrane proteins (LsrC and LsrD) and a solute-binding protein (LsrB).

The protein resides in the cell inner membrane. Its function is as follows. Part of the ABC transporter complex LsrABCD involved in autoinducer 2 (AI-2) import. Probably responsible for the translocation of the substrate across the membrane. The chain is Autoinducer 2 import system permease protein LsrC (lsrC) from Shigella flexneri.